Here is a 427-residue protein sequence, read N- to C-terminus: UDP-N-acetylglucosamine 1-carboxyvinyltransferase (427 aa).

Phosphoenolpyruvate is bound at residue 24 to 25 (KN). A UDP-N-acetyl-alpha-D-glucosamine-binding site is contributed by Arg-95. Cys-119 (proton donor) is an active-site residue. Cys-119 bears the 2-(S-cysteinyl)pyruvic acid O-phosphothioketal mark. UDP-N-acetyl-alpha-D-glucosamine-binding positions include 124-128 (RPVDQ), Asp-308, and Val-330.

This sequence belongs to the EPSP synthase family. MurA subfamily.

The protein resides in the cytoplasm. The enzyme catalyses phosphoenolpyruvate + UDP-N-acetyl-alpha-D-glucosamine = UDP-N-acetyl-3-O-(1-carboxyvinyl)-alpha-D-glucosamine + phosphate. It participates in cell wall biogenesis; peptidoglycan biosynthesis. Its function is as follows. Cell wall formation. Adds enolpyruvyl to UDP-N-acetylglucosamine. In Deinococcus geothermalis (strain DSM 11300 / CIP 105573 / AG-3a), this protein is UDP-N-acetylglucosamine 1-carboxyvinyltransferase.